We begin with the raw amino-acid sequence, 380 residues long: Mitogen-activated protein kinase 3 (380 aa).

The residue at position 2 (Ala-2) is an N-acetylalanine. The Protein kinase domain occupies 43–331 (YTQLQYIGEG…VEEALAHPYL (289 aa)). ATP contacts are provided by residues 49–57 (IGEGAYGMV) and Lys-72. The Proton acceptor role is filled by Asp-167. Phosphothreonine is present on Thr-199. Thr-203 bears the Phosphothreonine; by MAP2K1 and MAP2K2 mark. Positions 203 to 205 (TEY) match the TXY motif. Phosphotyrosine; by MAP2K1 and MAP2K2 is present on Tyr-205. Phosphothreonine; by autocatalysis is present on Thr-208.

Belongs to the protein kinase superfamily. CMGC Ser/Thr protein kinase family. MAP kinase subfamily. As to quaternary structure, binds both upstream activators and downstream substrates in multimolecular complexes. Found in a complex with at least BRAF, HRAS, MAP2K1/MEK1, MAPK3 and RGS14. Interacts with TPR. Interacts with ADAM15, ARRB2, CANX, DAPK1 (via death domain), HSF4, IER3, MAP2K1/MEK1, NISCH, and SGK1. Interacts with MORG1. Interacts with PEA15. Interacts with isoform 1 of MKNK2 and this binding prevents from dephosphorylation and inactivation. Interacts with CDKN2AIP. Interacts with HSF1 (via D domain and preferentially with hyperphosphorylated form); this interaction occurs upon heat shock. Interacts with CAVIN4. Interacts with GIT1; this interaction is necessary for MAPK3 localization to focal adhesions. Interacts with ZNF263. Interacts with EBF4. Mg(2+) serves as cofactor. Dually phosphorylated on Thr-203 and Tyr-205, which activates the enzyme. Ligand-activated ALK induces tyrosine phosphorylation. Dephosphorylated by PTPRJ at Tyr-205. Autophosphorylated on threonine and tyrosine residues in vitro. Phosphorylated upon FLT3 and KIT signaling. Post-translationally, ubiquitinated by TRIM15 via 'Lys-63'-linked ubiquitination; leading to activation. Deubiquitinated by CYLD.

The protein resides in the cytoplasm. It localises to the nucleus. Its subcellular location is the membrane. It is found in the caveola. The protein localises to the cell junction. The protein resides in the focal adhesion. The enzyme catalyses L-seryl-[protein] + ATP = O-phospho-L-seryl-[protein] + ADP + H(+). It carries out the reaction L-threonyl-[protein] + ATP = O-phospho-L-threonyl-[protein] + ADP + H(+). Its activity is regulated as follows. Phosphorylated by MAP2K1/MEK1 and MAP2K2/MEK2 on Thr-203 and Tyr-205 in response to external stimuli like insulin or NGF. Both phosphorylations are required for activity. This phosphorylation causes dramatic conformational changes, which enable full activation and interaction of MAPK1/ERK2 with its substrates. Dephosphorylated and inactivated by DUSP3, DUSP6 and DUSP9. In terms of biological role, serine/threonine kinase which acts as an essential component of the MAP kinase signal transduction pathway. MAPK1/ERK2 and MAPK3/ERK1 are the 2 MAPKs which play an important role in the MAPK/ERK cascade. They participate also in a signaling cascade initiated by activated KIT and KITLG/SCF. Depending on the cellular context, the MAPK/ERK cascade mediates diverse biological functions such as cell growth, adhesion, survival and differentiation through the regulation of transcription, translation, cytoskeletal rearrangements. The MAPK/ERK cascade also plays a role in initiation and regulation of meiosis, mitosis, and postmitotic functions in differentiated cells by phosphorylating a number of transcription factors. About 160 substrates have already been discovered for ERKs. Many of these substrates are localized in the nucleus, and seem to participate in the regulation of transcription upon stimulation. However, other substrates are found in the cytosol as well as in other cellular organelles, and those are responsible for processes such as translation, mitosis and apoptosis. Moreover, the MAPK/ERK cascade is also involved in the regulation of the endosomal dynamics, including lysosome processing and endosome cycling through the perinuclear recycling compartment (PNRC); as well as in the fragmentation of the Golgi apparatus during mitosis. The substrates include transcription factors (such as ATF2, BCL6, ELK1, ERF, FOS, HSF4 or SPZ1), cytoskeletal elements (such as CANX, CTTN, GJA1, MAP2, MAPT, PXN, SORBS3 or STMN1), regulators of apoptosis (such as BAD, BTG2, CASP9, DAPK1, IER3, MCL1 or PPARG), regulators of translation (such as EIF4EBP1) and a variety of other signaling-related molecules (like ARHGEF2, DEPTOR, FRS2 or GRB10). Protein kinases (such as RAF1, RPS6KA1/RSK1, RPS6KA3/RSK2, RPS6KA2/RSK3, RPS6KA6/RSK4, SYK, MKNK1/MNK1, MKNK2/MNK2, RPS6KA5/MSK1, RPS6KA4/MSK2, MAPKAPK3 or MAPKAPK5) and phosphatases (such as DUSP1, DUSP4, DUSP6 or DUSP16) are other substrates which enable the propagation the MAPK/ERK signal to additional cytosolic and nuclear targets, thereby extending the specificity of the cascade. The protein is Mitogen-activated protein kinase 3 (Mapk3) of Mus musculus (Mouse).